The primary structure comprises 411 residues: RING-H2 finger protein ATL65 (411 aa).

The disordered stretch occupies residues 1–32; it reads MRFVAPPPRSGDNSPSPSPSSGISEEILSRSS. Low complexity predominate over residues 10–21; the sequence is SGDNSPSPSPSS. Residues 36-56 form a helical membrane-spanning segment; sequence LEFSPPLIAMVVVLAAAFLFV. The segment at 156–198 adopts an RING-type; atypical zinc-finger fold; it reads CAVCLLEFEEGDYVRTLPLCFHAFHLECIDEWLRSHPNCPLCR.

It belongs to the RING-type zinc finger family. ATL subfamily.

Its subcellular location is the membrane. The enzyme catalyses S-ubiquitinyl-[E2 ubiquitin-conjugating enzyme]-L-cysteine + [acceptor protein]-L-lysine = [E2 ubiquitin-conjugating enzyme]-L-cysteine + N(6)-ubiquitinyl-[acceptor protein]-L-lysine.. It functions in the pathway protein modification; protein ubiquitination. The protein is RING-H2 finger protein ATL65 (ATL65) of Arabidopsis thaliana (Mouse-ear cress).